The sequence spans 893 residues: Serine/threonine-protein kinase PLK4 (893 aa).

The Protein kinase domain occupies 12-265 (FRVGNLLGKG…LSSVLDHPFM (254 aa)). ATP-binding positions include 18-26 (LGKGSFAGV) and Lys-41. An N6-acetyllysine mark is found at Lys-45 and Lys-46. Asp-136 (proton acceptor) is an active-site residue. The segment covering 349–358 (NQEQETSNSG) has biased composition (polar residues). The tract at residues 349–393 (NQEQETSNSGRGRVIQEAEERPHSRYLRRAHSSDRSETSHGQSRV) is disordered. Residues 362-371 (VIQEAEERPH) are compositionally biased toward basic and acidic residues. Phosphoserine is present on residues Ser-403 and Ser-588. Residues 509–622 (TLRSITSPLT…SRFVQLVRSK (114 aa)) enclose the Cryptic POLO box 1 (CPB1) domain. Residues 623 to 736 (SPKITYFTRY…GRRPSSTSSP (114 aa)) form the Cryptic POLO box 2 (CPB2) domain. A disordered region spans residues 730 to 749 (PSSTSSPKALTPPPPVDPNY). The region spanning 809–887 (QLLKSVFVKN…LSSILLMFSN (79 aa)) is the POLO box domain.

It belongs to the protein kinase superfamily. Ser/Thr protein kinase family. CDC5/Polo subfamily. As to quaternary structure, homodimer. Interacts with CEP152 (via N-terminus). Interacts with CEP78; this interaction may be important for proper PLK4 localization to the centriole and PLK4-induced overduplication of centrioles. Interacts with CEP131. Interacts simultaneously with TENT5C and CEP192. Interacts with TENT5C; this interaction leads to the TENT5C recruitment in the centrosome. Interacts with CEP85; this interaction may be important in cell migration and centriole assembly. Post-translationally, ubiquitinated; leading to its degradation by the proteasome. In terms of processing, tyrosine-phosphorylated by TEC. Acetylation by KAT2A and KAT2B impairs kinase activity by shifting the kinase to an inactive conformation.

The protein resides in the cytoplasm. The protein localises to the cytoskeleton. Its subcellular location is the microtubule organizing center. It localises to the centrosome. It is found in the centriole. The protein resides in the nucleus. The protein localises to the nucleolus. Its subcellular location is the cleavage furrow. It catalyses the reaction L-seryl-[protein] + ATP = O-phospho-L-seryl-[protein] + ADP + H(+). The catalysed reaction is L-threonyl-[protein] + ATP = O-phospho-L-threonyl-[protein] + ADP + H(+). Serine/threonine-protein kinase that plays a central role in centriole duplication. Able to trigger procentriole formation on the surface of the parental centriole cylinder, leading to the recruitment of centriole biogenesis proteins such as SASS6, CPAP, CCP110, CEP135 and gamma-tubulin. When overexpressed, it is able to induce centrosome amplification through the simultaneous generation of multiple procentrioles adjoining each parental centriole during S phase. Phosphorylates 'Ser-151' of FBXW5 during the G1/S transition, leading to inhibit FBXW5 ability to ubiquitinate SASS6. Its central role in centriole replication suggests a possible role in tumorigenesis, centrosome aberrations being frequently observed in tumors. Also involved in deuterosome-mediated centriole amplification in multiciliated that can generate more than 100 centrioles. Also involved in trophoblast differentiation by phosphorylating HAND1, leading to disrupt the interaction between HAND1 and MDFIC and activate HAND1. Phosphorylates CDC25C and CHEK2. Required for the recruitment of STIL to the centriole and for STIL-mediated centriole amplification. Phosphorylates CEP131 and PCM1 which is essential for proper organization and integrity of centriolar satellites. The protein is Serine/threonine-protein kinase PLK4 of Bos taurus (Bovine).